A 501-amino-acid polypeptide reads, in one-letter code: Putative lon protease homolog (501 aa).

An ATP-binding site is contributed by 53–60 (GPPGIGKS). Positions 481 to 494 (SSSQRMSQHGYSSE) are enriched in polar residues. A disordered region spans residues 481 to 501 (SSSQRMSQHGYSSENIDRSYM).

Belongs to the peptidase S16 family.

The protein is Putative lon protease homolog of Methanothermobacter thermautotrophicus (strain ATCC 29096 / DSM 1053 / JCM 10044 / NBRC 100330 / Delta H) (Methanobacterium thermoautotrophicum).